A 563-amino-acid polypeptide reads, in one-letter code: MNSNTIKTGIDRAPHRSLLKALGLTDRELSKPFIGVVNSFTELVPGHMHLRQVTEAVKAGIRENGGTPFEFSTIAVCDGIAMGHEGMHYSLASREIVADAIEVMAKGHQLDALVLIPSCDKVVPGMLMAAMRLNIPAIVVSGGPMLPGRFEGNPVTLSTVFEGVGQVHAGKKDEAWLHELEAKACPTCGSCAGMFTANSMNCLTEALGMALPGNGTIPAVYSERLVLAKETGYQVMELYRQDLKPRDIVTQSTLKNGVAVDMALGCSTNTILHLPAIANEGDIDWDLGKVNEVSEKTPQICKLAPASETPLAALHEAGGVSAVLKQLLDAGLIDGSTMTVSGVTMAERLKDAKVVDTEIIRPQSNPFSQRGGLRILFGNLAPEGAVIKQGALSSQDFVFEGSAKVFNGEVPAAEAIRNLEIKAGDVVVIRYEGPKGGPGMREMLGPTATLAGMGLDSDVALLTDGRFSGASRGLSIGHVSPEAALGGDIALLKDGDKIRIDIGKGRLEWIVSEEEREQRRQEFAAMAVKPDHLKPELRQGYLGRYAYFVQSASKGAALRRVKE.

Mg(2+) is bound at residue Asp78. Residue Cys119 participates in [2Fe-2S] cluster binding. Mg(2+) contacts are provided by Asp120 and Lys121. Position 121 is an N6-carboxylysine (Lys121). Cys191 provides a ligand contact to [2Fe-2S] cluster. Residue Glu442 participates in Mg(2+) binding. The active-site Proton acceptor is Ser468.

The protein belongs to the IlvD/Edd family. Homodimer. [2Fe-2S] cluster is required as a cofactor. The cofactor is Mg(2+).

It catalyses the reaction (2R)-2,3-dihydroxy-3-methylbutanoate = 3-methyl-2-oxobutanoate + H2O. The catalysed reaction is (2R,3R)-2,3-dihydroxy-3-methylpentanoate = (S)-3-methyl-2-oxopentanoate + H2O. The protein operates within amino-acid biosynthesis; L-isoleucine biosynthesis; L-isoleucine from 2-oxobutanoate: step 3/4. It functions in the pathway amino-acid biosynthesis; L-valine biosynthesis; L-valine from pyruvate: step 3/4. Functionally, functions in the biosynthesis of branched-chain amino acids. Catalyzes the dehydration of (2R,3R)-2,3-dihydroxy-3-methylpentanoate (2,3-dihydroxy-3-methylvalerate) into 2-oxo-3-methylpentanoate (2-oxo-3-methylvalerate) and of (2R)-2,3-dihydroxy-3-methylbutanoate (2,3-dihydroxyisovalerate) into 2-oxo-3-methylbutanoate (2-oxoisovalerate), the penultimate precursor to L-isoleucine and L-valine, respectively. This is Dihydroxy-acid dehydratase from Desulfitobacterium hafniense (strain DSM 10664 / DCB-2).